A 248-amino-acid chain; its full sequence is tRNA (guanine-N(7)-)-methyltransferase (248 aa).

Residues Glu-80, Glu-105, Asp-132, and Asp-155 each contribute to the S-adenosyl-L-methionine site. Residue Asp-155 is part of the active site. Substrate-binding positions include Lys-159, Asp-191, and 223-226; that span reads TKFE.

Belongs to the class I-like SAM-binding methyltransferase superfamily. TrmB family.

It catalyses the reaction guanosine(46) in tRNA + S-adenosyl-L-methionine = N(7)-methylguanosine(46) in tRNA + S-adenosyl-L-homocysteine. It functions in the pathway tRNA modification; N(7)-methylguanine-tRNA biosynthesis. Functionally, catalyzes the formation of N(7)-methylguanine at position 46 (m7G46) in tRNA. The protein is tRNA (guanine-N(7)-)-methyltransferase of Nocardioides sp. (strain ATCC BAA-499 / JS614).